The primary structure comprises 233 residues: V-type proton ATPase subunit E (233 aa).

This sequence belongs to the V-ATPase E subunit family. As to quaternary structure, V-ATPase is a heteromultimeric enzyme composed of a peripheral catalytic V1 complex (components A to H) attached to an integral membrane V0 proton pore complex (components: a, c, c', c'' and d).

Functionally, subunit of the peripheral V1 complex of vacuolar ATPase essential for assembly or catalytic function. V-ATPase is responsible for acidifying a variety of intracellular compartments in eukaryotic cells. The sequence is that of V-type proton ATPase subunit E (vatE) from Dictyostelium discoideum (Social amoeba).